A 228-amino-acid chain; its full sequence is UPF0758 protein STER_1430 (228 aa).

The MPN domain occupies Gln103 to Asp225. Zn(2+)-binding residues include His174, His176, and Asp187. Residues His174 to Asp187 carry the JAMM motif motif.

The protein belongs to the UPF0758 family.

The polypeptide is UPF0758 protein STER_1430 (Streptococcus thermophilus (strain ATCC BAA-491 / LMD-9)).